Reading from the N-terminus, the 74-residue chain is Turripeptide OL135 (74 aa).

The N-terminal stretch at 1 to 20 (MKVPIVLMLVLLLIMPLSDG) is a signal peptide. The propeptide occupies 21–28 (YERKRXXX).

The protein belongs to the conopeptide P-like superfamily. Post-translationally, contains 3 disulfide bonds. As to expression, expressed by the venom duct.

It localises to the secreted. In terms of biological role, acts as a neurotoxin by inhibiting an ion channel. The sequence is that of Turripeptide OL135 from Iotyrris olangoensis (Sea snail).